A 120-amino-acid chain; its full sequence is Thiosulfate sulfurtransferase 16, chloroplastic (120 aa).

The region spanning 20-120 (LLAGHRYLDV…WAKNGLPTKA (101 aa)) is the Rhodanese domain. C80 functions as the Cysteine persulfide intermediate in the catalytic mechanism. R85 contributes to the substrate binding site.

Monomer.

The protein resides in the plastid. It is found in the chloroplast. The enzyme catalyses thiosulfate + hydrogen cyanide = thiocyanate + sulfite + 2 H(+). Its function is as follows. Thought to act during the early stages of leaf senescence. Catalyzes the transfer of a sulfur ion from a donor to cyanide or to other thiol compounds. Substrate preference is thiosulfate &gt; 3-mercaptopyruvate. The chain is Thiosulfate sulfurtransferase 16, chloroplastic (STR16) from Arabidopsis thaliana (Mouse-ear cress).